Consider the following 236-residue polypeptide: 15,16-dihydrobiliverdin:ferredoxin oxidoreductase (236 aa).

The protein belongs to the HY2 family.

The catalysed reaction is 15,16-dihydrobiliverdin + oxidized 2[4Fe-4S]-[ferredoxin] = biliverdin IXalpha + reduced 2[4Fe-4S]-[ferredoxin] + 2 H(+). Functionally, catalyzes the two-electron reduction of biliverdin IX-alpha at the C15 methine bridge. The sequence is that of 15,16-dihydrobiliverdin:ferredoxin oxidoreductase from Prochlorococcus marinus (strain AS9601).